Consider the following 156-residue polypeptide: Translation initiation factor IF-1, chloroplastic (156 aa).

The transit peptide at 1 to 81 (MASLSWWNPA…RRTTSIQCLS (81 aa)) directs the protein to the chloroplast. Positions 51-79 (KSLLVKTQQQSKKKKNNSTNSRRTTSIQC) are disordered. A compositionally biased stretch (low complexity) spans 67–76 (NSTNSRRTTS). In terms of domain architecture, S1-like spans 82-151 (QEQKWTHEGS…SKGRIIYRLR (70 aa)).

Belongs to the IF-1 family. As to quaternary structure, component of the 30S ribosomal translation pre-initiation complex which assembles on the 30S ribosome in the order IF-2 and IF-3, IF-1 and N-formylmethionyl-tRNA(fMet); mRNA recruitment can occur at any time during PIC assembly.

The protein localises to the plastid. The protein resides in the chloroplast. Functionally, one of the essential components for the initiation of protein synthesis. Stabilizes the binding of IF-2 and IF-3 on the 30S subunit to which N-formylmethionyl-tRNA(fMet) subsequently binds. Helps modulate mRNA selection, yielding the 30S pre-initiation complex (PIC). Upon addition of the 50S ribosomal subunit IF-1, IF-2 and IF-3 are released leaving the mature 70S translation initiation complex. The protein is Translation initiation factor IF-1, chloroplastic (infA) of Solanum lycopersicum (Tomato).